Consider the following 288-residue polypeptide: Phenazine biosynthesis-like domain-containing protein 2 (288 aa).

The active site involves Glu-46.

The protein belongs to the PhzF family.

This Mus musculus (Mouse) protein is Phenazine biosynthesis-like domain-containing protein 2 (Pbld2).